The following is a 372-amino-acid chain: Peptidyl-prolyl cis-trans isomerase D (372 aa).

In terms of domain architecture, PPIase cyclophilin-type spans 9 to 175 (FFDISIGGKP…KEVKIEDCGV (167 aa)). 3 TPR repeats span residues 220–253 (VEAVKEIGTKQFKEKNFEVALVKYEKSSQMLKQY), 271–304 (VSLFLNIALVSLKSKNYSRTLSAATEALHADNTD), and 309–342 (AKALYRRGLAYYYTKNAEMAVTDLELATTYQPHD).

This sequence belongs to the cyclophilin-type PPIase family. PPIase D subfamily.

It localises to the cytoplasm. It carries out the reaction [protein]-peptidylproline (omega=180) = [protein]-peptidylproline (omega=0). PPIases accelerate the folding of proteins. It catalyzes the cis-trans isomerization of proline imidic peptide bonds in oligopeptides. The sequence is that of Peptidyl-prolyl cis-trans isomerase D (CPR6) from Kluyveromyces lactis (strain ATCC 8585 / CBS 2359 / DSM 70799 / NBRC 1267 / NRRL Y-1140 / WM37) (Yeast).